Here is a 143-residue protein sequence, read N- to C-terminus: Large ribosomal subunit protein uL11 (143 aa).

Belongs to the universal ribosomal protein uL11 family. As to quaternary structure, part of the ribosomal stalk of the 50S ribosomal subunit. Interacts with L10 and the large rRNA to form the base of the stalk. L10 forms an elongated spine to which L12 dimers bind in a sequential fashion forming a multimeric L10(L12)X complex. Post-translationally, one or more lysine residues are methylated.

Functionally, forms part of the ribosomal stalk which helps the ribosome interact with GTP-bound translation factors. The chain is Large ribosomal subunit protein uL11 from Saccharophagus degradans (strain 2-40 / ATCC 43961 / DSM 17024).